The sequence spans 75 residues: MKPNISLINAVFRIACGLTIMSAASAKFTKKPWCRMHLFYIFMGAMKAGSGILRFCPVTYMFQHSDSGNNEHQNG.

A run of 2 helical transmembrane segments spans residues 7–26 (LINA…AASA) and 36–58 (MHLF…FCPV).

It is found in the cell membrane. This is an uncharacterized protein from Bacillus subtilis (strain 168).